A 229-amino-acid polypeptide reads, in one-letter code: Uracil-DNA glycosylase (229 aa).

Catalysis depends on Asp-64, which acts as the Proton acceptor.

This sequence belongs to the uracil-DNA glycosylase (UDG) superfamily. UNG family.

The protein resides in the cytoplasm. The enzyme catalyses Hydrolyzes single-stranded DNA or mismatched double-stranded DNA and polynucleotides, releasing free uracil.. Its function is as follows. Excises uracil residues from the DNA which can arise as a result of misincorporation of dUMP residues by DNA polymerase or due to deamination of cytosine. The protein is Uracil-DNA glycosylase of Escherichia coli O45:K1 (strain S88 / ExPEC).